The sequence spans 164 residues: uncharacterized protein (164 aa).

A helical membrane pass occupies residues 46 to 66 (FIRPNIYLIIFIIIVLLLLYY). Residues 72 to 137 (KADKEKEKLE…YNLNKENLRE (66 aa)) adopt a coiled-coil conformation. Positions 76–91 (EKEKLEDTDKEFDKST) are enriched in basic and acidic residues. The disordered stretch occupies residues 76-114 (EKEKLEDTDKEFDKSTNNDTNSKKIYHRQKNSKTLNSSK).

It is found in the membrane. This is an uncharacterized protein from Acanthamoeba polyphaga mimivirus (APMV).